A 412-amino-acid chain; its full sequence is 2,3-bisphosphoglycerate-independent phosphoglycerate mutase (412 aa).

This sequence belongs to the BPG-independent phosphoglycerate mutase family. A-PGAM subfamily.

The catalysed reaction is (2R)-2-phosphoglycerate = (2R)-3-phosphoglycerate. It functions in the pathway carbohydrate degradation; glycolysis; pyruvate from D-glyceraldehyde 3-phosphate: step 3/5. Catalyzes the interconversion of 2-phosphoglycerate and 3-phosphoglycerate. This chain is 2,3-bisphosphoglycerate-independent phosphoglycerate mutase, found in Methanobrevibacter smithii (strain ATCC 35061 / DSM 861 / OCM 144 / PS).